The following is a 980-amino-acid chain: Ovochymase-2 (980 aa).

Positions 1-21 (MAETSVFSIMMLTVMTAVGRG) are cleaved as a signal peptide. Positions 22–49 (ATDRPGRVSRCGERPSANASVTYNLLSR) are cleaved as a propeptide — activation peptide. Residue asparagine 39 is glycosylated (N-linked (GlcNAc...) asparagine). Residues 50–299 (IVGGTSAVKG…LLNWLSANLN (250 aa)) enclose the Peptidase S1 1 domain. The cysteines at positions 75 and 91 are disulfide-linked. Residue histidine 90 is the Charge relay system of the active site. Positions 112 and 117 each coordinate Ca(2+). The active-site Charge relay system is the aspartate 140. Cystine bridges form between cysteine 174/cysteine 244, cysteine 205/cysteine 223, cysteine 234/cysteine 263, cysteine 312/cysteine 342, cysteine 369/cysteine 388, cysteine 435/cysteine 462, cysteine 489/cysteine 510, cysteine 618/cysteine 634, cysteine 716/cysteine 779, cysteine 744/cysteine 757, and cysteine 769/cysteine 798. The active-site Charge relay system is the serine 238. CUB domains lie at 312–425 (CSTN…YQAV) and 435–547 (CGSV…ISFV). A Peptidase S1 2 domain is found at 593 to 822 (IIKAEEAMPN…FIPWIMETIL (230 aa)). A propeptide spans 593–980 (IIKAEEAMPN…WLSYSFHNQN (388 aa)) (activation peptide). N-linked (GlcNAc...) asparagine glycosylation is present at asparagine 766. The interval 835–863 (HHPLIPPDKLSQEKALLPDSPPSNDSSSS) is disordered. 2 N-linked (GlcNAc...) asparagine glycosylation sites follow: asparagine 858 and asparagine 932.

This sequence belongs to the peptidase S1 family. The catalytically inactive 108 kDa form is processed both N- and C-terminally to give rise to catalytically active and inactive forms. Differentially expressed in the oviductal pars recta (PR) region.

It is found in the secreted. It carries out the reaction Preferential cleavage at 371-Gly-Ser-Arg-|-Trp-374 of glycoprotein gp43 in Xenopus laevis coelemic egg envelope to yield gp41.. Functionally, mediates gamete interaction by affecting the vitelline coat. This is Ovochymase-2 (OVCH2) from Rhinella arenarum (Argentine common toad).